The chain runs to 201 residues: 3-isopropylmalate dehydratase small subunit (201 aa).

The protein belongs to the LeuD family. LeuD type 1 subfamily. In terms of assembly, heterodimer of LeuC and LeuD.

The enzyme catalyses (2R,3S)-3-isopropylmalate = (2S)-2-isopropylmalate. The protein operates within amino-acid biosynthesis; L-leucine biosynthesis; L-leucine from 3-methyl-2-oxobutanoate: step 2/4. Functionally, catalyzes the isomerization between 2-isopropylmalate and 3-isopropylmalate, via the formation of 2-isopropylmaleate. This Sinorhizobium medicae (strain WSM419) (Ensifer medicae) protein is 3-isopropylmalate dehydratase small subunit.